The sequence spans 413 residues: Protein LAZY 1 (413 aa).

Residues 71-91 form a helical membrane-spanning segment; sequence FTFGGSGLLTIGTLGIAAVAV. The span at 103 to 124 shows a compositional bias: acidic residues; it reads DADADSDFDDNDDTAGDDEDQV. 2 disordered regions span residues 103 to 127 and 261 to 308; these read DADA…VDSA and EDGG…ASAT. 2 short sequence motifs (nuclear localization signal) span residues 275-298 and 338-345; these read RKAG…EKVP and KKSRKRGS.

Belongs to the LAZY family. In terms of tissue distribution, expressed in the node of the stem, initiating leaf founder cells, young leaf primordia, tips of axillary meristems, spikelet pair meristems of developing tassels and ears, male flower primordia, tassels, ears, silks and seeds. Expressed in leaf sheaths, leaf pulvinus and shoot apical meristem (SAM).

It is found in the cell membrane. Its subcellular location is the nucleus. Involved in the regulation of shoot gravitropism, and tassel and ear development through the regulation of polar auxin transport (PAT) and auxin signaling. Acts as a negative regulator of basipetal PAT, but positive regulator of lateral auxin transport. Involved in the regulation of shoot gravitropism and leaf angle through the regulation of cell development. The protein is Protein LAZY 1 of Zea mays (Maize).